Consider the following 330-residue polypeptide: Protein FAM170A (330 aa).

Disordered regions lie at residues 1-54, 76-104, and 169-218; these read MKRR…VTST, HRDS…HVSL, and VGTP…AKTP. A compositionally biased stretch (polar residues) spans 174-185; sequence SDVSTRNLLSDS. Residues 189–200 show a composition bias toward basic and acidic residues; it reads GEEKEHEERTES. Thr-217 carries the post-translational modification Phosphothreonine. Residues 228–252 form a C2H2-type; degenerate zinc finger; it reads FRCMACCRVFTTMEALQEHVQFGIR. The tract at residues 270–330 is disordered; it reads NMESESTQDE…VFHSPKDRNS (61 aa). Residues 275-293 are compositionally biased toward acidic residues; that stretch reads STQDEQEEENGNEKEEEEK. Ser-315 carries the phosphoserine modification.

This sequence belongs to the FAM170 family. As to expression, expressed strongly in testis and brain and weakly in prostate, spleen, pancreas and uterus.

Its subcellular location is the nucleus. Acts as a nuclear transcription factor that positively regulates the expression of heat shock genes. Binds to heat shock promoter elements (HSE). This is Protein FAM170A (FAM170A) from Homo sapiens (Human).